The chain runs to 325 residues: Zinc-type alcohol dehydrogenase-like protein C337.11 (325 aa).

It belongs to the zinc-containing alcohol dehydrogenase family. Quinone oxidoreductase subfamily.

Its subcellular location is the cytoplasm. It localises to the nucleus. In Schizosaccharomyces pombe (strain 972 / ATCC 24843) (Fission yeast), this protein is Zinc-type alcohol dehydrogenase-like protein C337.11.